Reading from the N-terminus, the 895-residue chain is Alanine--tRNA ligase (895 aa).

Zn(2+) is bound by residues histidine 586, histidine 590, cysteine 690, and histidine 694.

This sequence belongs to the class-II aminoacyl-tRNA synthetase family. It depends on Zn(2+) as a cofactor.

The protein resides in the cytoplasm. The enzyme catalyses tRNA(Ala) + L-alanine + ATP = L-alanyl-tRNA(Ala) + AMP + diphosphate. Functionally, catalyzes the attachment of alanine to tRNA(Ala) in a two-step reaction: alanine is first activated by ATP to form Ala-AMP and then transferred to the acceptor end of tRNA(Ala). Also edits incorrectly charged Ser-tRNA(Ala) and Gly-tRNA(Ala) via its editing domain. This is Alanine--tRNA ligase from Korarchaeum cryptofilum (strain OPF8).